Consider the following 299-residue polypeptide: MGAPKQKWTPEEEAALKAGVLKHGTGKWRTILSDTEFSLILKSRSNVDLKDKWRNISVTALWGSRKKAKLALKRTPPGTKQDDNNTALTIVALTNDDERAKPTSPGGSGGGSPRTCASKRSITSLDKIIFEAITNLRELRGSDRTSIFLYIEENFKTPPNMKRHVAVRLKHLSSNGTLVKIKHKYRFSSNFIPAGARQKAPQLFLEGNNKKDPTKPEENGANSLTKFRVDGELYMIKGMTAQEAAEAAARAVAEAEFAITEAEQAAKEAERAEAEAEAAQIFAKAAMKALKFRIRNHPW.

The HTH myb-type domain occupies 1-61 (MGAPKQKWTP…KWRNISVTAL (61 aa)). The segment at residues 28–57 (WRTILSDTEFSLILKSRSNVDLKDKWRNIS) is a DNA-binding region (H-T-H motif). Residues 93 to 116 (LTNDDERAKPTSPGGSGGGSPRTC) form a disordered region. Positions 121–189 (SITSLDKIIF…KIKHKYRFSS (69 aa)) constitute an H15 domain. Positions 243-288 (EAAEAAARAVAEAEFAITEAEQAAKEAERAEAEAEAAQIFAKAAMK) form a coiled coil.

Belongs to the histone H1/H5 family. SMH subfamily. Forms a homodimer and heterodimers with TRB1 or TRB3. Interacts with TRB1 and TRB3. As to expression, ubiquitous.

It is found in the nucleus. The protein localises to the nucleolus. The protein resides in the chromosome. Binds preferentially double-stranded telomeric repeats, but it can also bind to the single G-rich telomeric strand. The polypeptide is Telomere repeat-binding factor 2 (TRB2) (Arabidopsis thaliana (Mouse-ear cress)).